The sequence spans 113 residues: Large ribosomal subunit protein uL22 (113 aa).

It belongs to the universal ribosomal protein uL22 family. As to quaternary structure, part of the 50S ribosomal subunit.

In terms of biological role, this protein binds specifically to 23S rRNA; its binding is stimulated by other ribosomal proteins, e.g. L4, L17, and L20. It is important during the early stages of 50S assembly. It makes multiple contacts with different domains of the 23S rRNA in the assembled 50S subunit and ribosome. Functionally, the globular domain of the protein is located near the polypeptide exit tunnel on the outside of the subunit, while an extended beta-hairpin is found that lines the wall of the exit tunnel in the center of the 70S ribosome. In Herpetosiphon aurantiacus (strain ATCC 23779 / DSM 785 / 114-95), this protein is Large ribosomal subunit protein uL22.